Consider the following 71-residue polypeptide: ATP synthase F(0) complex subunit e, mitochondrial (71 aa).

Residue Lys34 is modified to N6-acetyllysine. Ser68 is modified (phosphoserine).

Belongs to the ATPase e subunit family. As to quaternary structure, component of the ATP synthase complex composed at least of ATP5F1A/subunit alpha, ATP5F1B/subunit beta, ATP5MC1/subunit c (homooctomer), MT-ATP6/subunit a, MT-ATP8/subunit 8, ATP5ME/subunit e, ATP5MF/subunit f, ATP5MG/subunit g, ATP5MK/subunit k, ATP5MJ/subunit j, ATP5F1C/subunit gamma, ATP5F1D/subunit delta, ATP5F1E/subunit epsilon, ATP5PF/subunit F6, ATP5PB/subunit b, ATP5PD/subunit d, ATP5PO/subunit OSCP. ATP synthase complex consists of a soluble F(1) head domain (subunits alpha(3) and beta(3)) - the catalytic core - and a membrane F(0) domain - the membrane proton channel (subunits c, a, 8, e, f, g, k and j). These two domains are linked by a central stalk (subunits gamma, delta, and epsilon) rotating inside the F1 region and a stationary peripheral stalk (subunits F6, b, d, and OSCP).

It localises to the mitochondrion. The protein localises to the mitochondrion inner membrane. In terms of biological role, subunit e, of the mitochondrial membrane ATP synthase complex (F(1)F(0) ATP synthase or Complex V) that produces ATP from ADP in the presence of a proton gradient across the membrane which is generated by electron transport complexes of the respiratory chain. ATP synthase complex consist of a soluble F(1) head domain - the catalytic core - and a membrane F(1) domain - the membrane proton channel. These two domains are linked by a central stalk rotating inside the F(1) region and a stationary peripheral stalk. During catalysis, ATP synthesis in the catalytic domain of F(1) is coupled via a rotary mechanism of the central stalk subunits to proton translocation. In vivo, can only synthesize ATP although its ATP hydrolase activity can be activated artificially in vitro. Part of the complex F(0) domain. This is ATP synthase F(0) complex subunit e, mitochondrial from Sus scrofa (Pig).